A 364-amino-acid polypeptide reads, in one-letter code: Homeobox protein Nkx-2.3 (364 aa).

The disordered stretch occupies residues 132 to 153; it reads GDCKAAEESERPKPRSRRKPRV. Residues 135 to 144 show a composition bias toward basic and acidic residues; the sequence is KAAEESERPK. A DNA-binding region (homeobox) is located at residues 148 to 207; that stretch reads RRKPRVLFSQAQVFELERRFKQQRYLSAPEREHLASSLKLTSTQVKIWFQNRRYKCKRQR.

Belongs to the NK-2 homeobox family.

It is found in the nucleus. Functionally, transcription factor. The polypeptide is Homeobox protein Nkx-2.3 (NKX2-3) (Homo sapiens (Human)).